Consider the following 595-residue polypeptide: Adenine deaminase 2 (595 aa).

Belongs to the metallo-dependent hydrolases superfamily. Adenine deaminase family. Mn(2+) serves as cofactor.

It carries out the reaction adenine + H2O + H(+) = hypoxanthine + NH4(+). The sequence is that of Adenine deaminase 2 from Rhizobium johnstonii (strain DSM 114642 / LMG 32736 / 3841) (Rhizobium leguminosarum bv. viciae).